The following is a 293-amino-acid chain: 4-hydroxy-tetrahydrodipicolinate synthase (293 aa).

Thr-47 is a binding site for pyruvate. The Proton donor/acceptor role is filled by Tyr-136. The active-site Schiff-base intermediate with substrate is Lys-164. Ile-206 provides a ligand contact to pyruvate.

This sequence belongs to the DapA family. Homotetramer; dimer of dimers.

The protein resides in the cytoplasm. It catalyses the reaction L-aspartate 4-semialdehyde + pyruvate = (2S,4S)-4-hydroxy-2,3,4,5-tetrahydrodipicolinate + H2O + H(+). The protein operates within amino-acid biosynthesis; L-lysine biosynthesis via DAP pathway; (S)-tetrahydrodipicolinate from L-aspartate: step 3/4. Functionally, catalyzes the condensation of (S)-aspartate-beta-semialdehyde [(S)-ASA] and pyruvate to 4-hydroxy-tetrahydrodipicolinate (HTPA). The sequence is that of 4-hydroxy-tetrahydrodipicolinate synthase from Listeria monocytogenes serotype 4b (strain CLIP80459).